Consider the following 658-residue polypeptide: Aminopeptidase P1 (658 aa).

A peptide contacts are provided by R69 and H436. Mn(2+)-binding residues include D456, D467, and H530. Positions 530, 539, and 563 each coordinate a peptide. Mn(2+) contacts are provided by E563 and E577.

It belongs to the peptidase M24B family. Homodimer. Interacts with N-1-naphthylphthalamic acid (NPA). Interacts with NBCL/BOP2/COCH around the plasma membrane and in the nucleus; this interaction disturbs its regulation of the nuclear transcription factor Y subunit (NF-YA1). Mn(2+) is required as a cofactor. Requires Zn(2+) as cofactor. As to expression, expressed at similar levels in shoot apical meristems (SAM), root meristems (RM), root apical meristems (RAM), roots and leaves and, to a slightly lesser degree, in root nodules.

It localises to the nucleus. The protein localises to the cytoplasm. Its subcellular location is the cell membrane. The protein resides in the microsome membrane. It carries out the reaction Release of any N-terminal amino acid, including proline, that is linked to proline, even from a dipeptide or tripeptide.. In terms of biological role, catalyzes the removal of a penultimate prolyl residue from the N-termini of peptides, such as Arg-Pro-Pro. Aminopeptidase that binds to the auxin transport inhibitor N-1-naphthylphthalamic acid (NPA). May play a negative role in the regulation of PIN auxin transport proteins. Involved in the coordination of the symbiotic nodule developmental program; prevents the formation of root nodules by regulating the expression of the nuclear transcription factor Y subunit (NF-YA1), a key nodulin. The polypeptide is Aminopeptidase P1 (Lotus japonicus (Lotus corniculatus var. japonicus)).